The sequence spans 215 residues: HTH-type transcriptional regulator for conjugative element R391 (215 aa).

An HTH cro/C1-type domain is found at 8-61 (LNHALQLTGVTQSELARRIGIKQQSISQICSGKSARSRYTMQIAEALRVNAHWL). The H-T-H motif DNA-binding region spans 19–38 (QSELARRIGIKQQSISQICS).

May control the expression of the integrase and inhibit excision of the mobile element R391, and regulate the expression of other genes as well. The sequence is that of HTH-type transcriptional regulator for conjugative element R391 from Providencia rettgeri.